Reading from the N-terminus, the 978-residue chain is Translation initiation factor IF-2 (978 aa).

Disordered regions lie at residues 107–129 and 146–387; these read AEAPALETEQEVEAAPQVDNLEL and QEEE…HRVQ. The span at 146-169 shows a compositional bias: basic and acidic residues; that stretch reads QEEELSERRRQREEQEARSREASE. A compositionally biased stretch (low complexity) spans 170-186; sequence KAAAVAAEAAEAAAAQA. Basic and acidic residues predominate over residues 215-259; the sequence is AEKEQHLAKEKGLAREKELAESKARAAEDVVRAADLGDRRRKAES. 2 stretches are compositionally biased toward low complexity: residues 295-326 and 349-361; these read KPAAGAVPAKPAKPGAPGAPGAPAAGAAAGAG and PTRGATAAPGAGR. A compositionally biased stretch (basic and acidic residues) spans 375–386; that stretch reads GSSDRDRDDHRV. The tr-type G domain maps to 478–647; it reads PRAPVVTVMG…LLQAEVLELK (170 aa). The segment at 487 to 494 is G1; the sequence is GHVDHGKT. 487–494 is a binding site for GTP; sequence GHVDHGKT. Residues 512-516 form a G2 region; the sequence is GITQH. The interval 533 to 536 is G3; the sequence is DTPG. GTP-binding positions include 533–537 and 587–590; these read DTPGH and NKID. A G4 region spans residues 587–590; sequence NKID. A G5 region spans residues 623–625; that stretch reads SAK.

It belongs to the TRAFAC class translation factor GTPase superfamily. Classic translation factor GTPase family. IF-2 subfamily.

It is found in the cytoplasm. Its function is as follows. One of the essential components for the initiation of protein synthesis. Protects formylmethionyl-tRNA from spontaneous hydrolysis and promotes its binding to the 30S ribosomal subunits. Also involved in the hydrolysis of GTP during the formation of the 70S ribosomal complex. The sequence is that of Translation initiation factor IF-2 from Albidiferax ferrireducens (strain ATCC BAA-621 / DSM 15236 / T118) (Rhodoferax ferrireducens).